The primary structure comprises 492 residues: UPF0236 protein TTE1650/TTE2708 (492 aa).

Belongs to the UPF0236 family.

The sequence is that of UPF0236 protein TTE1650/TTE2708 from Caldanaerobacter subterraneus subsp. tengcongensis (strain DSM 15242 / JCM 11007 / NBRC 100824 / MB4) (Thermoanaerobacter tengcongensis).